Here is a 132-residue protein sequence, read N- to C-terminus: Small ribosomal subunit protein uS8 (132 aa).

Belongs to the universal ribosomal protein uS8 family. Part of the 30S ribosomal subunit. Contacts proteins S5 and S12.

In terms of biological role, one of the primary rRNA binding proteins, it binds directly to 16S rRNA central domain where it helps coordinate assembly of the platform of the 30S subunit. In Streptococcus pneumoniae (strain Taiwan19F-14), this protein is Small ribosomal subunit protein uS8.